The chain runs to 345 residues: tRNA pseudouridine synthase B (345 aa).

Asp-39 functions as the Nucleophile in the catalytic mechanism.

This sequence belongs to the pseudouridine synthase TruB family. Type 1 subfamily.

It catalyses the reaction uridine(55) in tRNA = pseudouridine(55) in tRNA. Responsible for synthesis of pseudouridine from uracil-55 in the psi GC loop of transfer RNAs. This is tRNA pseudouridine synthase B from Rickettsia rickettsii (strain Iowa).